The sequence spans 473 residues: Pre-mRNA-splicing factor PRP46 (473 aa).

The span at 1–14 shows a compositional bias: polar residues; that stretch reads MSTSLETPSGTSAG. Disordered regions lie at residues 1 to 21 and 103 to 126; these read MSTSLETPSGTSAGPSIVASG and GPNVKLIGGPEAEKASSSTPQAVA. WD repeat units lie at residues 180-219, 222-261, 264-303, 306-347, 349-388, 391-429, and 440-473; these read GHMGWVRAVAMDPGSQWFATGAGDRVIKIWDLASGELKLS, GHISTIRGLAVSDRHPYLFSCAEDKMVKCWDLETNKVIRH, GHFSGVYSLSVHPTLDVLVTGGRDASVRVWDMRTRANIFT, GHTS…NTLT, HKKSVRALAIHPTEYSFASASSGGNNIKKWKCPEGIFVNN, GHEAIINTLSINSENVLFSGADNGTLTLWDYKTGLPFQH, and DAEAGVFCSTFDKTGTRLITGGADKTIKVYSEQA.

The protein belongs to the WD repeat PRL1/PRL2 family. As to quaternary structure, associated with the spliceosome.

It localises to the cytoplasm. Its subcellular location is the nucleus. Involved in pre-mRNA splicing and required for cell cycle progression at G2/M. The chain is Pre-mRNA-splicing factor PRP46 (PRP46) from Cryptococcus neoformans var. neoformans serotype D (strain B-3501A) (Filobasidiella neoformans).